The sequence spans 571 residues: Proline--tRNA ligase (571 aa).

Belongs to the class-II aminoacyl-tRNA synthetase family. ProS type 1 subfamily. Homodimer.

The protein localises to the cytoplasm. The catalysed reaction is tRNA(Pro) + L-proline + ATP = L-prolyl-tRNA(Pro) + AMP + diphosphate. In terms of biological role, catalyzes the attachment of proline to tRNA(Pro) in a two-step reaction: proline is first activated by ATP to form Pro-AMP and then transferred to the acceptor end of tRNA(Pro). As ProRS can inadvertently accommodate and process non-cognate amino acids such as alanine and cysteine, to avoid such errors it has two additional distinct editing activities against alanine. One activity is designated as 'pretransfer' editing and involves the tRNA(Pro)-independent hydrolysis of activated Ala-AMP. The other activity is designated 'posttransfer' editing and involves deacylation of mischarged Ala-tRNA(Pro). The misacylated Cys-tRNA(Pro) is not edited by ProRS. The sequence is that of Proline--tRNA ligase from Pseudomonas fluorescens (strain ATCC BAA-477 / NRRL B-23932 / Pf-5).